We begin with the raw amino-acid sequence, 346 residues long: UDP-N-acetylenolpyruvoylglucosamine reductase (346 aa).

Residues 18 to 189 enclose the FAD-binding PCMH-type domain; that stretch reads LRAQARAFIA…VSVVFALKTH (172 aa). Residue Arg165 is part of the active site. The active-site Proton donor is the Ser240. The active site involves Glu336.

Belongs to the MurB family. Requires FAD as cofactor.

It is found in the cytoplasm. It catalyses the reaction UDP-N-acetyl-alpha-D-muramate + NADP(+) = UDP-N-acetyl-3-O-(1-carboxyvinyl)-alpha-D-glucosamine + NADPH + H(+). It participates in cell wall biogenesis; peptidoglycan biosynthesis. In terms of biological role, cell wall formation. The polypeptide is UDP-N-acetylenolpyruvoylglucosamine reductase (Neisseria meningitidis serogroup A / serotype 4A (strain DSM 15465 / Z2491)).